A 231-amino-acid chain; its full sequence is Urease accessory protein UreE (231 aa).

The segment at valine 185–histidine 231 is disordered. The span at histidine 203–histidine 231 shows a compositional bias: basic and acidic residues.

This sequence belongs to the UreE family.

It is found in the cytoplasm. Involved in urease metallocenter assembly. Binds nickel. Probably functions as a nickel donor during metallocenter assembly. In Yersinia pestis bv. Antiqua (strain Antiqua), this protein is Urease accessory protein UreE.